A 460-amino-acid chain; its full sequence is Argininosuccinate lyase (460 aa).

The protein belongs to the lyase 1 family. Argininosuccinate lyase subfamily.

Its subcellular location is the cytoplasm. It carries out the reaction 2-(N(omega)-L-arginino)succinate = fumarate + L-arginine. Its pathway is amino-acid biosynthesis; L-arginine biosynthesis; L-arginine from L-ornithine and carbamoyl phosphate: step 3/3. The sequence is that of Argininosuccinate lyase from Staphylococcus haemolyticus (strain JCSC1435).